Here is a 275-residue protein sequence, read N- to C-terminus: NH(3)-dependent NAD(+) synthetase (275 aa).

Residue 46–53 participates in ATP binding; it reads GISGGQDS. A Mg(2+)-binding site is contributed by aspartate 52. Deamido-NAD(+) is bound at residue arginine 140. Threonine 160 is an ATP binding site. Glutamate 165 lines the Mg(2+) pocket. Residues lysine 173 and aspartate 180 each coordinate deamido-NAD(+). ATP-binding residues include lysine 189 and threonine 211. 260–261 lines the deamido-NAD(+) pocket; the sequence is HK.

Belongs to the NAD synthetase family. In terms of assembly, homodimer.

It catalyses the reaction deamido-NAD(+) + NH4(+) + ATP = AMP + diphosphate + NAD(+) + H(+). The protein operates within cofactor biosynthesis; NAD(+) biosynthesis; NAD(+) from deamido-NAD(+) (ammonia route): step 1/1. Its function is as follows. Catalyzes the ATP-dependent amidation of deamido-NAD to form NAD. Uses ammonia as a nitrogen source. The polypeptide is NH(3)-dependent NAD(+) synthetase (Salmonella typhi).